Here is a 41-residue protein sequence, read N- to C-terminus: GMGIGINLPPCIKNGEYCNPWTGSIILGGACCGTCTDYECH.

3 cysteine pairs are disulfide-bonded: Cys-11–Cys-32, Cys-18–Cys-35, and Cys-31–Cys-40.

As to expression, expressed by the venom duct.

The protein localises to the secreted. The chain is Augerpeptide hhe6.1 from Hastula hectica (Sea snail).